We begin with the raw amino-acid sequence, 383 residues long: Protein delta homolog 2 (383 aa).

Positions 1–26 (MPSGCRCLHLVCLLCILAAPVKPVRA) are cleaved as a signal peptide. EGF-like domains lie at 27–58 (DDCSSHCDLAHGCCAPDGSCRCDPGWEGLHCE), 62–89 (RMPGCQHGTCHQPWQCICHSGWAGKFCD), 91–129 (DEHVCTTQSPCRNGGQCIYDGGGEYHCVCPPGFHGRDCE), and 131–172 (KEGP…AHCE). At 27–306 (DDCSSHCDLA…RQEAGLGKSS (280 aa)) the chain is on the extracellular side. 17 disulfide bridges follow: Cys29-Cys40, Cys33-Cys46, Cys48-Cys57, Cys66-Cys71, Cys79-Cys88, Cys95-Cys107, Cys101-Cys117, Cys119-Cys128, Cys135-Cys148, Cys142-Cys160, Cys162-Cys171, Cys178-Cys189, Cys183-Cys198, Cys200-Cys209, Cys216-Cys227, Cys221-Cys236, and Cys238-Cys247. N-linked (GlcNAc...) asparagine glycosylation occurs at Asn157. In terms of domain architecture, EGF-like 5; calcium-binding spans 174-210 (NVDDCLMRPCANGATCLDGINRFSCLCPEGFAGRFCT). Residues 212–248 (NLDDCASRPCQRGARCRDRVHDFDCLCPSGYGGKTCE) enclose the EGF-like 6; calcium-binding domain. The helical transmembrane segment at 307 to 327 (LVAVVVFGAVTATLVLSTVLL) threads the bilayer. Residues 328 to 383 (TLRAWRRGVCPPGPCCYPAPHYAPARQDQECQVSMLPAGLPLPPDLPPEPGKTTAL) are Cytoplasmic-facing.

The protein resides in the membrane. Regulates adipogenesis. The sequence is that of Protein delta homolog 2 (DLK2) from Sus scrofa (Pig).